We begin with the raw amino-acid sequence, 316 residues long: Ribosomal RNA small subunit methyltransferase H (316 aa).

Residues 35–37 (SGH), Asp55, Phe84, Asp105, and Gln112 each bind S-adenosyl-L-methionine.

The protein belongs to the methyltransferase superfamily. RsmH family.

The protein localises to the cytoplasm. The enzyme catalyses cytidine(1402) in 16S rRNA + S-adenosyl-L-methionine = N(4)-methylcytidine(1402) in 16S rRNA + S-adenosyl-L-homocysteine + H(+). In terms of biological role, specifically methylates the N4 position of cytidine in position 1402 (C1402) of 16S rRNA. The sequence is that of Ribosomal RNA small subunit methyltransferase H from Streptococcus pyogenes serotype M4 (strain MGAS10750).